The following is a 478-amino-acid chain: Pyruvate kinase (478 aa).

Substrate is bound at residue R35. K(+) contacts are provided by N37, S39, and D69. 37 to 40 contributes to the ATP binding site; it reads NMSH. Residues R76 and K157 each coordinate ATP. Residue E219 coordinates Mg(2+). The substrate site is built by G242, D243, and T275. A Mg(2+)-binding site is contributed by D243.

Belongs to the pyruvate kinase family. In terms of assembly, homotetramer. Mg(2+) is required as a cofactor. It depends on K(+) as a cofactor.

The enzyme catalyses pyruvate + ATP = phosphoenolpyruvate + ADP + H(+). Its pathway is carbohydrate degradation; glycolysis; pyruvate from D-glyceraldehyde 3-phosphate: step 5/5. The protein is Pyruvate kinase (pyk) of Methylorubrum extorquens (strain ATCC 14718 / DSM 1338 / JCM 2805 / NCIMB 9133 / AM1) (Methylobacterium extorquens).